Reading from the N-terminus, the 545-residue chain is Capsular polysaccharide phosphotransferase SacB (545 aa).

This sequence belongs to the stealth family.

May be the polymerase that links individual UDP-N-acetyl-D-mannosamine monomers. In serotype A the capsule is composed of repeated units of (alpha 1-6)-linked N-acetyl-D-mannosamine-1-phosphate. The chain is Capsular polysaccharide phosphotransferase SacB (sacB) from Neisseria meningitidis serogroup A.